The following is a 126-amino-acid chain: Protein chibby homolog 1 (126 aa).

Polar residues predominate over residues 1–10; it reads MPFFGNTFSP. The disordered stretch occupies residues 1-26; that stretch reads MPFFGNTFSPKKTPPRKSASLSNLHS. A phosphoserine mark is found at Ser9 and Ser20. The segment at 60-112 is minimal region for the interaction with PKD2; that stretch reads IAETGVSGGVDRREVQRLRRRNQQLEEENNLLRLKVDILLDMLSESTAESHLM. Positions 67–125 form a coiled coil; that stretch reads GGVDRREVQRLRRRNQQLEEENNLLRLKVDILLDMLSESTAESHLMEKELDELRISRKR. A leucine-zipper; mediates homodimerization region spans residues 77 to 98; that stretch reads LRRRNQQLEEENNLLRLKVDIL.

This sequence belongs to the chibby family. As to quaternary structure, homodimer. Homodimerization is essential for nuclear localization and interaction with KPNA4 but is dispensable for interaction with CTNNB1. Interacts with polycystin-2/PKD2 and GM130. Interacts with the C-terminal region of CTNNB1. Interacts (C-terminus) with TCIM (C-terminus), TCIM competes with CTNNB1 for the interaction with CBY1. Interacts with FAM92A; this interaction facilitates targeting of FAM92A to cilium basal body. Interacts with CIBAR2. Interacts with KPNA4. As to expression, widely expressed. Expressed at higher levels in heart, skeletal muscle, kidney and placenta. Also found in brain, lung, liver and testis. Significantly down-regulated in thyroid and metastatic uterine tumors.

It is found in the nucleus speckle. The protein resides in the cytoplasm. The protein localises to the cytoskeleton. It localises to the cilium basal body. Its subcellular location is the microtubule organizing center. It is found in the centrosome. The protein resides in the centriole. The protein localises to the golgi apparatus. It localises to the trans-Golgi network. Its subcellular location is the cell projection. It is found in the cilium. The protein resides in the flagellum. The protein localises to the nucleus. Functionally, inhibits the Wnt/Wingless pathway by binding to CTNNB1/beta-catenin and inhibiting beta-catenin-mediated transcriptional activation through competition with TCF/LEF transcription factors. Has also been shown to play a role in regulating the intracellular trafficking of polycystin-2/PKD2 and possibly of other intracellular proteins. Promotes adipocyte and cardiomyocyte differentiation. The polypeptide is Protein chibby homolog 1 (CBY1) (Homo sapiens (Human)).